A 156-amino-acid chain; its full sequence is uncharacterized protein (156 aa).

A signal peptide spans 1 to 22 (MFGKVSSLLVFASFLIIQGAFA). Serine 129 is lipidated: GPI-anchor amidated serine. A propeptide spans 130 to 156 (GSPVRFSKSSLLIVSLLSIAAFAALVL) (removed in mature form).

It localises to the cell membrane. This is an uncharacterized protein from Schizosaccharomyces pombe (strain 972 / ATCC 24843) (Fission yeast).